The chain runs to 362 residues: Thiol protease aleurain (362 aa).

Residues 1-22 form the signal peptide; that stretch reads MAHARVLLLALAVLATAAVAVA. The propeptide at 23–143 is activation peptide; sequence SSSSFADSNP…GNHLMRDAAA (121 aa). Intrachain disulfides connect C165–C208 and C199–C241. The active site involves C168. N188 is a glycosylation site (N-linked (GlcNAc...) asparagine). A glycan (N-linked (GlcNAc...) asparagine) is linked at N257. A disulfide bond links C299 and C349. Residues H308 and N328 contribute to the active site.

This sequence belongs to the peptidase C1 family.

It localises to the vacuole. It carries out the reaction Hydrolysis of proteins, acting as an aminopeptidase (notably, cleaving Arg-|-Xaa bonds) as well as an endopeptidase.. Its function is as follows. May play a role in proteolysis leading to mobilization of nitrogen during senescence and starvation. The sequence is that of Thiol protease aleurain from Hordeum vulgare (Barley).